Reading from the N-terminus, the 104-residue chain is Nucleoid-associated protein Moth_0028 (104 aa).

It belongs to the YbaB/EbfC family. As to quaternary structure, homodimer.

The protein resides in the cytoplasm. It is found in the nucleoid. Binds to DNA and alters its conformation. May be involved in regulation of gene expression, nucleoid organization and DNA protection. This Moorella thermoacetica (strain ATCC 39073 / JCM 9320) protein is Nucleoid-associated protein Moth_0028.